A 372-amino-acid polypeptide reads, in one-letter code: Histidine protein methyltransferase 1 homolog (372 aa).

2 disordered regions span residues 30–55 (SKEL…QFDL) and 68–103 (NAAP…AKEH). Residues 39–49 (QKGEERDRKCS) are compositionally biased toward basic and acidic residues. Over residues 70–87 (APSQDTDSPLSAASSSRN) the composition is skewed to polar residues. Phosphoserine is present on residues Ser-72 and Ser-77. Tele-methylhistidine; by autocatalysis is present on His-154. S-adenosyl-L-methionine is bound by residues 168 to 172 (IWECT), Gly-195, and 216 to 218 (QDY). Residues 247–253 (PDVKRCR) carry the Nuclear localization signal motif. S-adenosyl-L-methionine contacts are provided by residues 268-270 (GEW) and Ser-293.

It belongs to the methyltransferase superfamily. METTL18 family. Interacts with GRWD1 and members of the heat shock protein 90 and 70 families; these proteins may possibly be methylation substrates for the enzyme. Post-translationally, monomethylated at His-154 through automethylation. Automethylation at His-154 positively regulates the methyltransferase activity toward RPL3. Probably methylated on other residues.

The protein localises to the cytoplasm. It localises to the cytosol. It is found in the nucleus. The protein resides in the nucleolus. It catalyses the reaction L-histidyl-[protein] + S-adenosyl-L-methionine = N(tele)-methyl-L-histidyl-[protein] + S-adenosyl-L-homocysteine + H(+). Its function is as follows. Protein-L-histidine N-tele-methyltransferase that specifically monomethylates RPL3, thereby regulating translation elongation. Histidine methylation of RPL3 regulates translation elongation by slowing ribosome traversal on tyrosine codons: slower elongation provides enough time for proper folding of synthesized proteins and prevents cellular aggregation of tyrosine-rich proteins. The polypeptide is Histidine protein methyltransferase 1 homolog (Homo sapiens (Human)).